A 597-amino-acid chain; its full sequence is Probable HECT-type ubiquitin ligase-interacting protein creD (597 aa).

Disordered regions lie at residues 375–398 (ELDP…GTLS) and 432–499 (LNIT…MATP). The span at 443–455 (TDHESQNDSEHRR) shows a compositional bias: basic and acidic residues. Residues 465–481 (PSSGSNSHSPSSPVLSR) show a composition bias toward low complexity. A compositionally biased stretch (basic and acidic residues) spans 482–492 (RPSDEVDHEHV).

It belongs to the arrestin family. In terms of assembly, interacts with hulA.

In terms of biological role, component of the regulatory network controlling carbon source utilization through ubiquitination and deubiquitination involving creA, creB, creC, creD and acrB. May be involved in signaling by recognizing appropriately phosphorylated substrates via its arrestin domains and then recruit a HECT-type ubiquitin ligase such as hulA, leading to ubiquitination of the substrate, providing a link between ubiquitination and phosphorylation in protein regulation and stability. This chain is Probable HECT-type ubiquitin ligase-interacting protein creD (creD), found in Aspergillus oryzae (strain ATCC 42149 / RIB 40) (Yellow koji mold).